The sequence spans 53 residues: Large ribosomal subunit protein bL32c (53 aa).

The tract at residues methionine 1–isoleucine 21 is disordered.

It belongs to the bacterial ribosomal protein bL32 family.

It is found in the plastid. Its subcellular location is the chloroplast. This is Large ribosomal subunit protein bL32c (rpl32) from Cyanidium caldarium (Red alga).